Here is a 149-residue protein sequence, read N- to C-terminus: 3-dehydroquinate dehydratase (149 aa).

Tyrosine 26 serves as the catalytic Proton acceptor. 3 residues coordinate substrate: asparagine 78, histidine 84, and aspartate 91. The active-site Proton donor is the histidine 104. Substrate contacts are provided by residues 105 to 106 (IS) and arginine 115.

Belongs to the type-II 3-dehydroquinase family. In terms of assembly, homododecamer.

It carries out the reaction 3-dehydroquinate = 3-dehydroshikimate + H2O. Its pathway is metabolic intermediate biosynthesis; chorismate biosynthesis; chorismate from D-erythrose 4-phosphate and phosphoenolpyruvate: step 3/7. Catalyzes a trans-dehydration via an enolate intermediate. In Buchnera aphidicola subsp. Schizaphis graminum (strain Sg), this protein is 3-dehydroquinate dehydratase (aroQ).